We begin with the raw amino-acid sequence, 128 residues long: ATP synthase epsilon chain (128 aa).

This sequence belongs to the ATPase epsilon chain family. F-type ATPases have 2 components, CF(1) - the catalytic core - and CF(0) - the membrane proton channel. CF(1) has five subunits: alpha(3), beta(3), gamma(1), delta(1), epsilon(1). CF(0) has three main subunits: a, b and c.

The protein resides in the cell inner membrane. In terms of biological role, produces ATP from ADP in the presence of a proton gradient across the membrane. The polypeptide is ATP synthase epsilon chain (Sulfurovum sp. (strain NBC37-1)).